The sequence spans 396 residues: Transcription factor E2FC (396 aa).

Positions 34–48 are enriched in polar residues; that stretch reads PRYSSLTPSSTNRPF. The tract at residues 34-57 is disordered; sequence PRYSSLTPSSTNRPFSVSQSLPNS. A DNA-binding region spans residues 155-220; the sequence is RYDSSLGLLT…TTKNHIRWKG (66 aa). Positions 226–268 form a coiled coil; sequence QKDLGDQISRLKSEVESMQSEESRLDDLIRERQEALRSLEEDD. The tract at residues 236–264 is leucine-zipper; that stretch reads LKSEVESMQSEESRLDDLIRERQEALRSL. Residues 376–391 are retinoblastoma protein binding; sequence DYWFESDAEVSLTDLW.

This sequence belongs to the E2F/DP family. In terms of assembly, heterodimer with DP proteins. Interacts preferentially with DPB, but also with DPA. No interaction with DPB when phosphorylated. Interacts with SKP2A, CDKA-1 and maize retinoblastoma-related protein RBR1. Component of a DREAM-like complex which modulates a variety of developmentally regulated genes and of the mitotic genes in proliferating and differentiated cells. Interacts with MYB3R3 at later stages of leaves development. In terms of processing, phosphorylated by cyclin-dependent kinase. Phosphorylation is necessary to target E2FC for proteolysis. In terms of tissue distribution, expressed in meristematic areas, vascular tissues, apical part of the roots, cotyledons, upper region of the hypocotyls, trichomes, young flower buds and pollen grains.

The protein resides in the cytoplasm. Its function is as follows. Involved in transcriptional repression. May act by repressing E2F-regulated genes in mature differentiated cells, but is not an antagonist of E2FA. Restricts cell division and is involved in the coordination between cell proliferation and endoreduplication during development. May play a role during the transition from skotomorphogenesis to photomorphogenesis. Regulated by phosphorylation-dependent proteolysis via the protein-ubiquitin ligase SCF(SKP2A) complex. The polypeptide is Transcription factor E2FC (E2FC) (Arabidopsis thaliana (Mouse-ear cress)).